Reading from the N-terminus, the 270-residue chain is 2-oxoglutarate synthase subunit KorB (270 aa).

In terms of assembly, heterotetramer of the KorA, KorB, KorC and KorD subunits.

It catalyses the reaction 2 oxidized [2Fe-2S]-[ferredoxin] + 2-oxoglutarate + CoA = succinyl-CoA + 2 reduced [2Fe-2S]-[ferredoxin] + CO2 + H(+). The sequence is that of 2-oxoglutarate synthase subunit KorB (korB) from Methanocaldococcus jannaschii (strain ATCC 43067 / DSM 2661 / JAL-1 / JCM 10045 / NBRC 100440) (Methanococcus jannaschii).